The following is a 102-amino-acid chain: ATP-dependent Clp protease adapter protein ClpS (102 aa).

This sequence belongs to the ClpS family. Binds to the N-terminal domain of the chaperone ClpA.

Involved in the modulation of the specificity of the ClpAP-mediated ATP-dependent protein degradation. The polypeptide is ATP-dependent Clp protease adapter protein ClpS (Herminiimonas arsenicoxydans).